A 660-amino-acid polypeptide reads, in one-letter code: Polycomb protein SCMH1 (660 aa).

2 MBT repeats span residues 28 to 126 and 134 to 235; these read FTWD…LQPP and SSWP…LQPP. Residues 233–345 form a disordered region; sequence QPPGTKVVIP…EPDTSTVPQD (113 aa). 2 stretches are compositionally biased toward basic residues: residues 273–284 and 305–320; these read RGRKPGKKRGRT and FPKK…RKPR. Residues 330-343 show a composition bias toward low complexity; that stretch reads PTTSTPEPDTSTVP. The SAM domain maps to 593 to 658; sequence WTVEDVMQFV…SYHIDRLKQG (66 aa).

It belongs to the SCM family. Interacts with the SAM domain of PHC1 via its SAM domain in vitro. Associates with a PRC1-like complex. As to expression, strongly expressed in heart, muscle and pancreas. Weakly expressed in brain, placenta, lung, liver and kidney.

The protein resides in the nucleus. Functionally, associates with Polycomb group (PcG) multiprotein complexes; the complex class is required to maintain the transcriptionally repressive state of some genes. This chain is Polycomb protein SCMH1, found in Homo sapiens (Human).